The following is a 670-amino-acid chain: Probable Na(+)/H(+) antiporter nhx-3 (670 aa).

8 helical membrane passes run 41–61 (VYVITTWLLVASLAKILFNLM), 73–93 (LLIIVGLGLGYFLNQTTLSGV), 97–117 (SHAFFLYLLPPIIFDAGYFMP), 129–149 (LVFSVLGTLWNTFAIGGSLLI), 164–184 (EILVFSALISAVDPVAVIAIF), 192–212 (FLFINVFGEALFNDGVTVVLY), 235–255 (GLSFFVVALGGAAIGIIFAIA), and 268–288 (ILAPVFIFLLPYMAYLTAEMV). A glycan (N-linked (GlcNAc...) asparagine) is linked at Asn-310. 4 helical membrane-spanning segments follow: residues 325-345 (MLAQCSETVIFMFLGLSTLTS), 351-371 (FIFIGATLVFCLIYRAIGIIV), 390-410 (FILSYGGLRGAIAYGLVVSIP), and 418-438 (MFITTTICVIYFTVFLQGITI). A disordered region spans residues 648-670 (GDLKGHCGTSRKPKHSMFELRHV).

This sequence belongs to the monovalent cation:proton antiporter 1 (CPA1) transporter (TC 2.A.36) family. In terms of processing, phosphorylated. In terms of tissue distribution, expressed in hypodermal cells of the main body syncytium, ut1 cells of the vulva and the spermathecal junction cell.

Its subcellular location is the endomembrane system. In terms of biological role, plays a role in epithelial membrane transport processes. The sequence is that of Probable Na(+)/H(+) antiporter nhx-3 (nhx-3) from Caenorhabditis elegans.